We begin with the raw amino-acid sequence, 529 residues long: Transcription factor BIM1 (529 aa).

Disordered regions lie at residues 1 to 91 (MELP…HVLP), 245 to 291 (KKES…RRSK), 425 to 450 (RVASSEAVEPSPSSRSQKEEEDEEVL), and 491 to 529 (AKQSSSSSFKDHEVREPVSRTRNDNVKQTRKPKRLKTGQ). Over residues 76 to 86 (KPPPPAPPPPL) the composition is skewed to pro residues. Composition is skewed to basic and acidic residues over residues 255-265 (HRVDLRVKADV) and 282-291 (SATEQRRRSK). Residues 276-326 (TPRSKHSATEQRRRSKINDRFQMLRQLIPNSDQKRDKASFLLEVIEYIQFL) enclose the bHLH domain. The segment covering 426-438 (VASSEAVEPSPSS) has biased composition (low complexity). The segment covering 499-517 (FKDHEVREPVSRTRNDNVK) has biased composition (basic and acidic residues). Basic residues predominate over residues 518–529 (QTRKPKRLKTGQ).

Homodimer. Interacts with BZR2/BES1 through both C-terminal and bHLH domains. Also interacts with LHW. Expressed constitutively in roots.

The protein resides in the nucleus. Its function is as follows. Positive brassinosteroid-signaling protein. Transcription factor that bind specifically to the DNA sequence 5'-CANNTG-3'(E box). Can bind individually to the promoter as a homodimer or synergistically as a heterodimer with BZR2/BES1. Does not itself activate transcription but enhances BZR2/BES1-mediated target gene activation. This Arabidopsis thaliana (Mouse-ear cress) protein is Transcription factor BIM1 (BIM1).